Reading from the N-terminus, the 445-residue chain is Homogentisate 1,2-dioxygenase (445 aa).

Position 98 is an N6-acetyllysine (K98). Fe cation is bound by residues H335, E341, and H371. Residue K414 is modified to N6-succinyllysine.

It belongs to the homogentisate dioxygenase family. In terms of assembly, homohexamer arranged as a dimer of trimers. It depends on Fe cation as a cofactor. In terms of tissue distribution, highest expression in the prostate, small intestine, colon, kidney and liver.

The enzyme catalyses homogentisate + O2 = 4-maleylacetoacetate + H(+). It functions in the pathway amino-acid degradation; L-phenylalanine degradation; acetoacetate and fumarate from L-phenylalanine: step 4/6. Catalyzes the conversion of homogentisate to maleylacetoacetate. The protein is Homogentisate 1,2-dioxygenase (HGD) of Homo sapiens (Human).